Consider the following 499-residue polypeptide: Maturase K (499 aa).

It belongs to the intron maturase 2 family. MatK subfamily.

It is found in the plastid. Its subcellular location is the chloroplast. Usually encoded in the trnK tRNA gene intron. Probably assists in splicing its own and other chloroplast group II introns. This Camellia sasanqua (Christmas camellia) protein is Maturase K.